Consider the following 333-residue polypeptide: HTH-type transcriptional repressor PurR (333 aa).

Residues 2 to 56 form the HTH lacI-type domain; that stretch reads ATIKDVAKMAGVSTTTVSHVINKTRFVAKETEQQVLQAIKNLNYSPSAVARSLKV. A DNA-binding region (H-T-H motif) is located at residues 4-23; the sequence is IKDVAKMAGVSTTTVSHVIN. A DNA-binding region spans residues 48-56; that stretch reads SAVARSLKV. Hypoxanthine contacts are provided by Tyr-73, Lys-189, Thr-191, Phe-220, and Asp-274.

Homodimer.

The protein operates within purine metabolism; purine nucleotide biosynthesis [regulation]. Is the main repressor of the genes involved in the de novo synthesis of purine nucleotides, regulating purB, purC, purEK, purF, purHD, purL, purMN and guaBA expression. PurR is allosterically activated to bind its cognate DNA by binding the purine corepressors, hypoxanthine or guanine, thereby effecting transcription repression. The chain is HTH-type transcriptional repressor PurR from Histophilus somni (strain 2336) (Haemophilus somnus).